Here is a 388-residue protein sequence, read N- to C-terminus: Na(+)/H(+) antiporter NhaA (388 aa).

11 helical membrane passes run 14 to 34, 59 to 79, 95 to 115, 125 to 145, 154 to 174, 179 to 199, 219 to 239, 254 to 274, 292 to 312, 328 to 348, and 360 to 380; these read GGII…MGAT, MLLW…GLEV, AFPV…YLAF, GWAI…ALLG, IFLM…IALF, LSIV…LLNL, VLKS…FIPL, VLHP…NAGV, IIAG…WLAL, IMAV…IASL, and WAKL…YSWL.

Belongs to the NhaA Na(+)/H(+) (TC 2.A.33) antiporter family.

It localises to the cell inner membrane. It carries out the reaction Na(+)(in) + 2 H(+)(out) = Na(+)(out) + 2 H(+)(in). Na(+)/H(+) antiporter that extrudes sodium in exchange for external protons. This is Na(+)/H(+) antiporter NhaA from Salmonella paratyphi A (strain ATCC 9150 / SARB42).